Here is a 214-residue protein sequence, read N- to C-terminus: Adenylate kinase (214 aa).

10–15 (GAGKGT) contributes to the ATP binding site. Residues 30-59 (STGDMLRAAIKAGTELGLNAKAVMDAGQLV) are NMP. Residues T31, R36, 57-59 (QLV), 85-88 (GFPR), and Q92 each bind AMP. The segment at 122 to 159 (GRRVHSGSGRTYHVVFNPPKVEGKDDVTGEDLVIRADD) is LID. ATP contacts are provided by residues R123 and 132 to 133 (TY). 2 residues coordinate AMP: R156 and R167. Residue Q200 participates in ATP binding.

The protein belongs to the adenylate kinase family. As to quaternary structure, monomer.

Its subcellular location is the cytoplasm. The enzyme catalyses AMP + ATP = 2 ADP. It participates in purine metabolism; AMP biosynthesis via salvage pathway; AMP from ADP: step 1/1. Its function is as follows. Catalyzes the reversible transfer of the terminal phosphate group between ATP and AMP. Plays an important role in cellular energy homeostasis and in adenine nucleotide metabolism. This Aeromonas salmonicida (strain A449) protein is Adenylate kinase.